We begin with the raw amino-acid sequence, 79 residues long: Sec-independent protein translocase protein TatA (79 aa).

Residues 1 to 21 traverse the membrane as a helical segment; it reads MGEFSLTHILLLAVIFLIFFG. The tract at residues 52-79 is disordered; the sequence is DIHDNQQVSHQNKQSMGQTQKQGENQNS. The segment covering 56–79 has biased composition (polar residues); sequence NQQVSHQNKQSMGQTQKQGENQNS.

Belongs to the TatA/E family. As to quaternary structure, the Tat system comprises two distinct complexes: a TatABC complex, containing multiple copies of TatA, TatB and TatC subunits, and a separate TatA complex, containing only TatA subunits. Substrates initially bind to the TatABC complex, which probably triggers association of the separate TatA complex to form the active translocon.

The protein localises to the cell inner membrane. Functionally, part of the twin-arginine translocation (Tat) system that transports large folded proteins containing a characteristic twin-arginine motif in their signal peptide across membranes. TatA could form the protein-conducting channel of the Tat system. The polypeptide is Sec-independent protein translocase protein TatA (Bdellovibrio bacteriovorus (strain ATCC 15356 / DSM 50701 / NCIMB 9529 / HD100)).